Consider the following 271-residue polypeptide: Formamidopyrimidine-DNA glycosylase (271 aa).

Catalysis depends on Pro-2, which acts as the Schiff-base intermediate with DNA. Glu-3 (proton donor) is an active-site residue. Lys-56 serves as the catalytic Proton donor; for beta-elimination activity. His-89, Arg-107, and Lys-151 together coordinate DNA. The FPG-type zinc-finger motif lies at 236–270 (NVYGRAGLPCRQCGTPVRLLRQGQRSTYFCPHCQR). Arg-260 (proton donor; for delta-elimination activity) is an active-site residue.

Belongs to the FPG family. As to quaternary structure, monomer. The cofactor is Zn(2+).

The catalysed reaction is Hydrolysis of DNA containing ring-opened 7-methylguanine residues, releasing 2,6-diamino-4-hydroxy-5-(N-methyl)formamidopyrimidine.. It catalyses the reaction 2'-deoxyribonucleotide-(2'-deoxyribose 5'-phosphate)-2'-deoxyribonucleotide-DNA = a 3'-end 2'-deoxyribonucleotide-(2,3-dehydro-2,3-deoxyribose 5'-phosphate)-DNA + a 5'-end 5'-phospho-2'-deoxyribonucleoside-DNA + H(+). Its function is as follows. Involved in base excision repair of DNA damaged by oxidation or by mutagenic agents. Acts as a DNA glycosylase that recognizes and removes damaged bases. Has a preference for oxidized purines, such as 7,8-dihydro-8-oxoguanine (8-oxoG). Has AP (apurinic/apyrimidinic) lyase activity and introduces nicks in the DNA strand. Cleaves the DNA backbone by beta-delta elimination to generate a single-strand break at the site of the removed base with both 3'- and 5'-phosphates. This is Formamidopyrimidine-DNA glycosylase from Acidovorax sp. (strain JS42).